We begin with the raw amino-acid sequence, 314 residues long: Probable cell division protein WhiA (314 aa).

A DNA-binding region (H-T-H motif) is located at residues S274 to S308.

Belongs to the WhiA family.

Its function is as follows. Involved in cell division and chromosome segregation. In Staphylococcus haemolyticus (strain JCSC1435), this protein is Probable cell division protein WhiA.